The sequence spans 525 residues: GMP synthase [glutamine-hydrolyzing] (525 aa).

The 200-residue stretch at 8–207 folds into the Glutamine amidotransferase type-1 domain; it reads KILILDFGSQ…ALEICGCPAN (200 aa). C85 acts as the Nucleophile in catalysis. Residues H181 and E183 contribute to the active site. The 193-residue stretch at 208–400 folds into the GMPS ATP-PPase domain; sequence WKPSSIIEDA…LGLPYDMLYR (193 aa). Position 235–241 (235–241) interacts with ATP; that stretch reads SGGVDSS.

In terms of assembly, homodimer.

The enzyme catalyses XMP + L-glutamine + ATP + H2O = GMP + L-glutamate + AMP + diphosphate + 2 H(+). Its pathway is purine metabolism; GMP biosynthesis; GMP from XMP (L-Gln route): step 1/1. Functionally, catalyzes the synthesis of GMP from XMP. This chain is GMP synthase [glutamine-hydrolyzing], found in Shewanella pealeana (strain ATCC 700345 / ANG-SQ1).